We begin with the raw amino-acid sequence, 344 residues long: Phosphoribosylformylglycinamidine cyclo-ligase (344 aa).

It belongs to the AIR synthase family.

It localises to the cytoplasm. The enzyme catalyses 2-formamido-N(1)-(5-O-phospho-beta-D-ribosyl)acetamidine + ATP = 5-amino-1-(5-phospho-beta-D-ribosyl)imidazole + ADP + phosphate + H(+). The protein operates within purine metabolism; IMP biosynthesis via de novo pathway; 5-amino-1-(5-phospho-D-ribosyl)imidazole from N(2)-formyl-N(1)-(5-phospho-D-ribosyl)glycinamide: step 2/2. The chain is Phosphoribosylformylglycinamidine cyclo-ligase from Neisseria gonorrhoeae (strain ATCC 700825 / FA 1090).